The primary structure comprises 296 residues: MEANSGGGGGAEGGRAVTGGGGGGGGSDVELVSKTLQVEHKLFYFDLKENPRGRYLKISEKTSATRSTIIVPSSGISWFLDLFNYYVNSEEHELFSKELQLDSKVFYFDIGENRRGRFLKVSEASVSRNRSTIIVPAGSSPDEGWAAFRNILAEIHEASGLFVMPNQVKPSDGQEHLVDDVGAGFIPGHGSQQPSSSEHNVDRTIDSPGQEETGMTGVSKVIRADQKRFFFDLGNNNRGHFLRISEVAGSDRSSIILPLSGLKQFHEVIGHFVEITKDKIEGMTGANVRTVDPPQR.

At Met1 the chain carries N-acetylmethionine. Disordered stretches follow at residues 1 to 25 and 186 to 214; these read MEANSGGGGGAEGGRAVTGGGGGGG and IPGHGSQQPSSSEHNVDRTIDSPGQEETG. At Ser207 the chain carries Phosphoserine.

Belongs to the PUR DNA-binding protein family. Homodimer. Interacts with TCP20.

It localises to the nucleus. Functionally, transcription factor that specifically binds the purine-rich double-stranded telomeric repeated sequence 5'-AAACCCTAA-3' found in promoter telo boxes. The sequence is that of Transcription factor Pur-alpha 1 (PURA1) from Arabidopsis thaliana (Mouse-ear cress).